The following is a 346-amino-acid chain: N-acetyl-gamma-glutamyl-phosphate reductase (346 aa).

Residue C154 is part of the active site.

The protein belongs to the NAGSA dehydrogenase family. Type 1 subfamily.

The protein resides in the cytoplasm. The catalysed reaction is N-acetyl-L-glutamate 5-semialdehyde + phosphate + NADP(+) = N-acetyl-L-glutamyl 5-phosphate + NADPH + H(+). It functions in the pathway amino-acid biosynthesis; L-arginine biosynthesis; N(2)-acetyl-L-ornithine from L-glutamate: step 3/4. Its function is as follows. Catalyzes the NADPH-dependent reduction of N-acetyl-5-glutamyl phosphate to yield N-acetyl-L-glutamate 5-semialdehyde. This Rhodopirellula baltica (strain DSM 10527 / NCIMB 13988 / SH1) protein is N-acetyl-gamma-glutamyl-phosphate reductase.